The chain runs to 79 residues: uncharacterized protein (79 aa).

This is an uncharacterized protein from Saccharomyces cerevisiae (strain ATCC 204508 / S288c) (Baker's yeast).